A 236-amino-acid chain; its full sequence is 2-C-methyl-D-erythritol 4-phosphate cytidylyltransferase (236 aa).

The protein belongs to the IspD/TarI cytidylyltransferase family. IspD subfamily.

The enzyme catalyses 2-C-methyl-D-erythritol 4-phosphate + CTP + H(+) = 4-CDP-2-C-methyl-D-erythritol + diphosphate. It functions in the pathway isoprenoid biosynthesis; isopentenyl diphosphate biosynthesis via DXP pathway; isopentenyl diphosphate from 1-deoxy-D-xylulose 5-phosphate: step 2/6. Functionally, catalyzes the formation of 4-diphosphocytidyl-2-C-methyl-D-erythritol from CTP and 2-C-methyl-D-erythritol 4-phosphate (MEP). This Burkholderia thailandensis (strain ATCC 700388 / DSM 13276 / CCUG 48851 / CIP 106301 / E264) protein is 2-C-methyl-D-erythritol 4-phosphate cytidylyltransferase.